Reading from the N-terminus, the 873-residue chain is DNA mismatch repair protein MutS (873 aa).

Residue 620 to 627 coordinates ATP; that stretch reads GPNMAGKS.

It belongs to the DNA mismatch repair MutS family.

In terms of biological role, this protein is involved in the repair of mismatches in DNA. It is possible that it carries out the mismatch recognition step. This protein has a weak ATPase activity. The sequence is that of DNA mismatch repair protein MutS from Ruminiclostridium cellulolyticum (strain ATCC 35319 / DSM 5812 / JCM 6584 / H10) (Clostridium cellulolyticum).